Reading from the N-terminus, the 224-residue chain is MNSDLALLRLLQLASPGLPVGGFTYSQGLEWAVEAGWVRGVDSFVGWQREQVHDTLACLDWPVLARLYRACQAEDAEAFGHWSRFLLANRETAELRLEEQQRGAALARLLDGWQLGQAPAWRASLELTQLGGMAWLAAHWAIPLRQLALGHGFAWLEGAVMAGVKLVPFGQQAAQTLLRDLGADLPAALDQALALGDDQLGGGLPLLAIASSRHETQYTRLFRS.

It belongs to the UreF family. As to quaternary structure, ureD, UreF and UreG form a complex that acts as a GTP-hydrolysis-dependent molecular chaperone, activating the urease apoprotein by helping to assemble the nickel containing metallocenter of UreC. The UreE protein probably delivers the nickel.

The protein localises to the cytoplasm. In terms of biological role, required for maturation of urease via the functional incorporation of the urease nickel metallocenter. This is Urease accessory protein UreF from Pseudomonas putida (strain ATCC 700007 / DSM 6899 / JCM 31910 / BCRC 17059 / LMG 24140 / F1).